The sequence spans 865 residues: Protein translocase subunit SecA (865 aa).

Residues Gln-93, Gly-111–Thr-115, and Asp-501 contribute to the ATP site. Zn(2+) is bound by residues Cys-841, Cys-843, Cys-852, and Cys-853.

It belongs to the SecA family. In terms of assembly, monomer and homodimer. Part of the essential Sec protein translocation apparatus which comprises SecA, SecYEG and auxiliary proteins SecDF-YajC and YidC. It depends on Zn(2+) as a cofactor.

The protein localises to the cell inner membrane. It localises to the cytoplasm. It catalyses the reaction ATP + H2O + cellular proteinSide 1 = ADP + phosphate + cellular proteinSide 2.. Part of the Sec protein translocase complex. Interacts with the SecYEG preprotein conducting channel. Has a central role in coupling the hydrolysis of ATP to the transfer of proteins into and across the cell membrane, serving as an ATP-driven molecular motor driving the stepwise translocation of polypeptide chains across the membrane. The polypeptide is Protein translocase subunit SecA (Helicobacter pylori (strain ATCC 700392 / 26695) (Campylobacter pylori)).